We begin with the raw amino-acid sequence, 334 residues long: Anthranilate phosphoribosyltransferase (334 aa).

5-phospho-alpha-D-ribose 1-diphosphate contacts are provided by residues Gly-81, 84 to 85 (GD), Thr-89, 91 to 94 (NIST), 109 to 117 (KHGSRSVSS), and Ala-121. Gly-81 lines the anthranilate pocket. Ser-93 contacts Mg(2+). An anthranilate-binding site is contributed by Arg-167. Residues Asp-225 and Glu-226 each coordinate Mg(2+).

It belongs to the anthranilate phosphoribosyltransferase family. As to quaternary structure, homodimer. Requires Mg(2+) as cofactor.

The enzyme catalyses N-(5-phospho-beta-D-ribosyl)anthranilate + diphosphate = 5-phospho-alpha-D-ribose 1-diphosphate + anthranilate. Its pathway is amino-acid biosynthesis; L-tryptophan biosynthesis; L-tryptophan from chorismate: step 2/5. Catalyzes the transfer of the phosphoribosyl group of 5-phosphorylribose-1-pyrophosphate (PRPP) to anthranilate to yield N-(5'-phosphoribosyl)-anthranilate (PRA). The chain is Anthranilate phosphoribosyltransferase from Actinobacillus pleuropneumoniae serotype 5b (strain L20).